The chain runs to 72 residues: Large ribosomal subunit protein bL31 (72 aa).

The Zn(2+) site is built by Cys-16, Cys-18, Cys-38, and Cys-41.

This sequence belongs to the bacterial ribosomal protein bL31 family. Type A subfamily. Part of the 50S ribosomal subunit. Zn(2+) is required as a cofactor.

Binds the 23S rRNA. The polypeptide is Large ribosomal subunit protein bL31 (Aromatoleum aromaticum (strain DSM 19018 / LMG 30748 / EbN1) (Azoarcus sp. (strain EbN1))).